A 208-amino-acid polypeptide reads, in one-letter code: CD209 antigen-like protein E (208 aa).

Over 1 to 16 (MRAPQMGSLGFLDKGH) the chain is Cytoplasmic. The chain crosses the membrane as a helical; Signal-anchor for type II membrane protein span at residues 17-37 (IPLVLQLLFLILFTGLLVAII). Residues 38–208 (IQVSKMPSSE…KIATTCLSKW (171 aa)) are Extracellular-facing. Disulfide bonds link cysteine 77–cysteine 88, cysteine 105–cysteine 197, and cysteine 176–cysteine 189. Positions 83–198 (FFNGNCYFFS…CEQRKFWICK (116 aa)) constitute a C-type lectin domain.

The protein resides in the membrane. Functionally, putative pathogen-recognition receptor. May mediate the endocytosis of pathogens which are subsequently degraded in lysosomal compartments. The sequence is that of CD209 antigen-like protein E (Cd209e) from Mus musculus (Mouse).